The following is a 710-amino-acid chain: Polyribonucleotide nucleotidyltransferase (710 aa).

The Mg(2+) site is built by D488 and D494. The KH domain maps to 555 to 615 (PVIKVISIDP…EKVDAAIEQI (61 aa)). The region spanning 625–688 (GDVFSGKVTR…NLGRLQLEEF (64 aa)) is the S1 motif domain. The interval 688–710 (FSDSPDHKHGEKRSFKRHRKNDN) is disordered. A compositionally biased stretch (basic and acidic residues) spans 691 to 700 (SPDHKHGEKR). Basic residues predominate over residues 701–710 (SFKRHRKNDN).

This sequence belongs to the polyribonucleotide nucleotidyltransferase family. Mg(2+) serves as cofactor.

It is found in the cytoplasm. The catalysed reaction is RNA(n+1) + phosphate = RNA(n) + a ribonucleoside 5'-diphosphate. Involved in mRNA degradation. Catalyzes the phosphorolysis of single-stranded polyribonucleotides processively in the 3'- to 5'-direction. This Pseudothermotoga lettingae (strain ATCC BAA-301 / DSM 14385 / NBRC 107922 / TMO) (Thermotoga lettingae) protein is Polyribonucleotide nucleotidyltransferase.